The following is a 108-amino-acid chain: Insulin (108 aa).

Residues 1–23 (MALWILLPLLALLILWGPDPAQA) form the signal peptide. Cystine bridges form between cysteine 30-cysteine 94 and cysteine 43-cysteine 107. The propeptide at 57–88 (EVEDPQVGQVELGAGPGAGSEQTLALEVARQA) is c peptide.

The protein belongs to the insulin family. In terms of assembly, heterodimer of a B chain and an A chain linked by two disulfide bonds.

The protein resides in the secreted. Its function is as follows. Insulin decreases blood glucose concentration. It increases cell permeability to monosaccharides, amino acids and fatty acids. It accelerates glycolysis, the pentose phosphate cycle, and glycogen synthesis in liver. In Rodentia sp, this protein is Insulin (INS).